The primary structure comprises 292 residues: Shikimate dehydrogenase (NADP(+)) (292 aa).

Shikimate contacts are provided by residues 22-24 and S69; that span reads SLS. K73 (proton acceptor) is an active-site residue. Shikimate-binding residues include N94 and D111. Residues 135–139 and I236 each bind NADP(+); that span reads GVGGA. Residue Y238 participates in shikimate binding. Position 260 (G260) interacts with NADP(+).

It belongs to the shikimate dehydrogenase family. In terms of assembly, homodimer.

The enzyme catalyses shikimate + NADP(+) = 3-dehydroshikimate + NADPH + H(+). Its pathway is metabolic intermediate biosynthesis; chorismate biosynthesis; chorismate from D-erythrose 4-phosphate and phosphoenolpyruvate: step 4/7. Involved in the biosynthesis of the chorismate, which leads to the biosynthesis of aromatic amino acids. Catalyzes the reversible NADPH linked reduction of 3-dehydroshikimate (DHSA) to yield shikimate (SA). This is Shikimate dehydrogenase (NADP(+)) from Streptococcus pyogenes serotype M18 (strain MGAS8232).